Here is a 147-residue protein sequence, read N- to C-terminus: DNA polymerase III subunit chi (147 aa).

This sequence belongs to the DNA polymerase III chi/HolC chain family. The DNA polymerase III holoenzyme complex contains at least 10 different subunits organized into 3 functionally essential subassemblies: the Pol III core, the beta sliding clamp processivity factor and the clamp-loading complex. The Pol III core (subunits alpha, epsilon and theta) contains the polymerase and the 3'-5' exonuclease proofreading activities. The polymerase is tethered to the template via the dimeric beta sliding clamp processivity factor. The clamp-loading complex (also called gamma complex) assembles the beta sliding clamp onto the primed template and plays a central role in the organization and communication at the replication fork. The clamp-loading complex contains delta, delta', psi and chi, and 3 copies of either or both of two different DnaX proteins, gamma and tau. The DNA replisome complex has a single clamp loader (3 tau and 1 each of delta, delta', psi and chi subunits) which binds 3 Pol III cores (1 core on the leading strand and 2 on the lagging strand) each with a beta sliding clamp dimer. Additional proteins in the replisome are other copies of gamma, psi (holD) and chi (this protein), SSB, DNA helicase and RNA primase. The clamp loader hydrolyzes ATP to assemble the beta processivity factor onto the primed template and plays a central role in the organization and communication at the replication fork. The only subunit of the DNA polymerase III holoenzyme known to interact with single-stranded DNA binding protein (SSB). Interacts directly with the psi subunit (holD). Interacts directly with DNA helicase YoaA. It binds to HolD and YoaA, but not both simultaneously.

It carries out the reaction DNA(n) + a 2'-deoxyribonucleoside 5'-triphosphate = DNA(n+1) + diphosphate. In terms of biological role, part of the beta sliding clamp loading complex, which hydrolyzes ATP to load the beta clamp onto primed DNA to form the DNA replication pre-initiation complex. DNA polymerase III is a complex, multichain enzyme responsible for most of the replicative synthesis in bacteria. This DNA polymerase also exhibits 3' to 5' exonuclease activity. Genetically identified as involved in the repair of replication forks and tolerance of the chain-terminating nucleoside analog 3' AZT. This subunit may stabilize YoaA and/or stimulate the helicase activity of YoaA. The sequence is that of DNA polymerase III subunit chi from Escherichia coli (strain K12).